Consider the following 307-residue polypeptide: Ornithine carbamoyltransferase (307 aa).

Carbamoyl phosphate is bound by residues 50 to 53, Q77, R101, and 128 to 131; these read STRT and HPCQ. L-ornithine contacts are provided by residues N160, D224, and 228-229; that span reads SM. Carbamoyl phosphate contacts are provided by residues 264–265 and R292; that span reads CL.

This sequence belongs to the aspartate/ornithine carbamoyltransferase superfamily. OTCase family.

It localises to the cytoplasm. It catalyses the reaction carbamoyl phosphate + L-ornithine = L-citrulline + phosphate + H(+). It participates in amino-acid biosynthesis; L-arginine biosynthesis; L-arginine from L-ornithine and carbamoyl phosphate: step 1/3. Functionally, reversibly catalyzes the transfer of the carbamoyl group from carbamoyl phosphate (CP) to the N(epsilon) atom of ornithine (ORN) to produce L-citrulline. The polypeptide is Ornithine carbamoyltransferase (Mycolicibacterium gilvum (strain PYR-GCK) (Mycobacterium gilvum (strain PYR-GCK))).